The sequence spans 337 residues: Glyceraldehyde-3-phosphate dehydrogenase (337 aa).

NADP(+) contacts are provided by residues 11–12, 34–35, and G110; these read TV and TR. A D-glyceraldehyde 3-phosphate-binding site is contributed by 139–141; it reads SCN. Catalysis depends on C140, which acts as the Nucleophile. Residue D171 coordinates NADP(+). 194 to 195 serves as a coordination point for D-glyceraldehyde 3-phosphate; that stretch reads HG. Q300 is a binding site for NADP(+).

Belongs to the glyceraldehyde-3-phosphate dehydrogenase family. In terms of assembly, homotetramer.

It localises to the cytoplasm. The enzyme catalyses D-glyceraldehyde 3-phosphate + phosphate + NADP(+) = (2R)-3-phospho-glyceroyl phosphate + NADPH + H(+). It carries out the reaction D-glyceraldehyde 3-phosphate + phosphate + NAD(+) = (2R)-3-phospho-glyceroyl phosphate + NADH + H(+). Its pathway is carbohydrate degradation; glycolysis; pyruvate from D-glyceraldehyde 3-phosphate: step 1/5. Functionally, exhibits a dual-cofactor specificity, with a marked preference for NADP(+) over NAD(+). The sequence is that of Glyceraldehyde-3-phosphate dehydrogenase (gap) from Methanothermus fervidus.